Here is a 160-residue protein sequence, read N- to C-terminus: Large ribosomal subunit protein uL22c (160 aa).

This sequence belongs to the universal ribosomal protein uL22 family. As to quaternary structure, part of the 50S ribosomal subunit.

It localises to the plastid. Its subcellular location is the chloroplast. In terms of biological role, this protein binds specifically to 23S rRNA. Its function is as follows. The globular domain of the protein is located near the polypeptide exit tunnel on the outside of the subunit, while an extended beta-hairpin is found that lines the wall of the exit tunnel in the center of the 70S ribosome. This Olimarabidopsis pumila (Dwarf rocket) protein is Large ribosomal subunit protein uL22c (rpl22).